A 636-amino-acid chain; its full sequence is Fructose-1,6-bisphosphatase class 3 (636 aa).

It belongs to the FBPase class 3 family. Mn(2+) serves as cofactor.

The enzyme catalyses beta-D-fructose 1,6-bisphosphate + H2O = beta-D-fructose 6-phosphate + phosphate. The protein operates within carbohydrate biosynthesis; gluconeogenesis. The sequence is that of Fructose-1,6-bisphosphatase class 3 from Streptococcus gordonii (strain Challis / ATCC 35105 / BCRC 15272 / CH1 / DL1 / V288).